The sequence spans 271 residues: Membrane protein insertase YidC 1 (271 aa).

A signal peptide spans 1–20; the sequence is MKKKLKTFSLILLTGSLLVA. The N-palmitoyl cysteine moiety is linked to residue Cys21. Cys21 is lipidated: S-diacylglycerol cysteine. 4 helical membrane passes run 45-65, 124-144, 163-183, and 201-221; these read IQWL…TLII, YASV…FQAL, PDPY…STWL, and VMPF…VLYW.

This sequence belongs to the OXA1/ALB3/YidC family. Type 2 subfamily.

It localises to the cell membrane. Its function is as follows. Required for the insertion and/or proper folding and/or complex formation of integral membrane proteins into the membrane. Involved in integration of membrane proteins that insert both dependently and independently of the Sec translocase complex, as well as at least some lipoproteins. The chain is Membrane protein insertase YidC 1 from Streptococcus agalactiae serotype III (strain NEM316).